The sequence spans 177 residues: MAKKQRNEIDWTDEEEEIIWVSKSEIKRDAEHLKKLGASLIELNSANLAKMPIDDTLREAIELAQRLRLEARRRQIQYIGKLLRNVDHEPIQEALDKVENRHNQQQALLHKLELIRDELIEQGDSAINPLVDEYPTLDRQHLRNLIRAAQKEKQANKPPKNYREIFQYLKSTIIEQN.

The protein belongs to the DarP family.

Its subcellular location is the cytoplasm. In terms of biological role, member of a network of 50S ribosomal subunit biogenesis factors which assembles along the 30S-50S interface, preventing incorrect 23S rRNA structures from forming. Promotes peptidyl transferase center (PTC) maturation. This chain is Dual-action ribosomal maturation protein DarP, found in Glaesserella parasuis serovar 5 (strain SH0165) (Haemophilus parasuis).